A 116-amino-acid chain; its full sequence is MNTVRVTFLLVFVLAVSLGQADKDENRMEMQEKTEQGKSYLDFAENLLLQKLEELEAKLLEEDSEESRNSRQKRCIGEGVPCDENDPRCCSGLVCLKPTLHGIWYKSYYCYKKWSA.

The N-terminal stretch at 1–21 is a signal peptide; that stretch reads MNTVRVTFLLVFVLAVSLGQA. Residues 22 to 74 constitute a propeptide that is removed on maturation; the sequence is DKDENRMEMQEKTEQGKSYLDFAENLLLQKLEELEAKLLEEDSEESRNSRQKR. Residues 61–83 are disordered; the sequence is EEDSEESRNSRQKRCIGEGVPCD. 3 cysteine pairs are disulfide-bonded: Cys75/Cys90, Cys82/Cys95, and Cys89/Cys110.

The protein belongs to the neurotoxin 14 (magi-1) family. 01 (HNTX-16) subfamily. In terms of tissue distribution, expressed by the venom gland.

The protein localises to the secreted. Functionally, probable ion channel inhibitor. The polypeptide is U11-theraphotoxin-Hhn1c (Cyriopagopus hainanus (Chinese bird spider)).